The sequence spans 198 residues: Transcription factor FapR (198 aa).

In terms of domain architecture, MaoC-like spans 102-169 (NRIARGHHLF…RTIVEVNSYV (68 aa)).

The protein belongs to the FapR family.

In terms of biological role, transcriptional factor involved in regulation of membrane lipid biosynthesis by repressing genes involved in fatty acid and phospholipid metabolism. The sequence is that of Transcription factor FapR from Geobacillus sp. (strain WCH70).